Reading from the N-terminus, the 445-residue chain is Xylose isomerase (445 aa).

Active-site residues include His107 and Asp110. 7 residues coordinate Mg(2+): Glu238, Glu274, His277, Asp302, Asp313, Asp315, and Asp345.

The protein belongs to the xylose isomerase family. As to quaternary structure, homotetramer. Requires Mg(2+) as cofactor.

It localises to the cytoplasm. It carries out the reaction alpha-D-xylose = alpha-D-xylulofuranose. The polypeptide is Xylose isomerase (xylA) (Bacillus spizizenii (strain ATCC 23059 / NRRL B-14472 / W23) (Bacillus subtilis subsp. spizizenii)).